A 483-amino-acid chain; its full sequence is MFS-type transporter ppzB (483 aa).

A run of 5 helical transmembrane segments spans residues 18–38 (FILT…GILL), 62–82 (AFLA…GWAA), 96–116 (MFLV…LLVV), 149–169 (IGTI…LGGV), and 178–198 (AVFA…ALVI). N-linked (GlcNAc...) asparagine glycosylation occurs at Asn219. The next 6 membrane-spanning stretches (helical) occupy residues 281–301 (LAML…ATVP), 310–330 (FSSL…FALG), 344–364 (AAAT…GLPE), 374–394 (VALF…VTSP), 424–444 (FGFS…LGGF), and 453–473 (VMGA…FLFV).

Belongs to the major facilitator superfamily. TCR/Tet family.

It is found in the membrane. Functionally, MFS-type transporter; part of the gene cluster that mediates the biosynthesis of pyrrolopyrazines, secondary metabolites showing insecticidal activity. Probably involved in the secretion of peramine and other pyrrolopyrazines. The chain is MFS-type transporter ppzB from Metarhizium rileyi (strain RCEF 4871) (Nomuraea rileyi).